Consider the following 933-residue polypeptide: Isoleucine--tRNA ligase (933 aa).

A 'HIGH' region motif is present at residues 57–67 (PYANGNIHMGH). An L-isoleucyl-5'-AMP-binding site is contributed by glutamate 556. Positions 597-601 (KMSKS) match the 'KMSKS' region motif. ATP is bound at residue lysine 600. Residues cysteine 891, cysteine 894, cysteine 911, and cysteine 914 each contribute to the Zn(2+) site.

This sequence belongs to the class-I aminoacyl-tRNA synthetase family. IleS type 1 subfamily. As to quaternary structure, monomer. Zn(2+) is required as a cofactor.

Its subcellular location is the cytoplasm. It catalyses the reaction tRNA(Ile) + L-isoleucine + ATP = L-isoleucyl-tRNA(Ile) + AMP + diphosphate. Catalyzes the attachment of isoleucine to tRNA(Ile). As IleRS can inadvertently accommodate and process structurally similar amino acids such as valine, to avoid such errors it has two additional distinct tRNA(Ile)-dependent editing activities. One activity is designated as 'pretransfer' editing and involves the hydrolysis of activated Val-AMP. The other activity is designated 'posttransfer' editing and involves deacylation of mischarged Val-tRNA(Ile). This chain is Isoleucine--tRNA ligase, found in Pediococcus pentosaceus (strain ATCC 25745 / CCUG 21536 / LMG 10740 / 183-1w).